The chain runs to 150 residues: Cytochrome c oxidase subunit 5A, mitochondrial (150 aa).

A mitochondrion-targeting transit peptide spans 1–41; the sequence is MLGAALRRCAVAATAWAGPRGLLHSAPTPGPAAAIHSVRCY. The SIFI-degron signature appears at 2 to 17; that stretch reads LGAALRRCAVAATAWA. An N6-acetyllysine mark is found at K87 and K113. T141 carries the phosphothreonine modification.

This sequence belongs to the cytochrome c oxidase subunit 5A family. As to quaternary structure, component of the cytochrome c oxidase (complex IV, CIV), a multisubunit enzyme composed of 14 subunits. The complex is composed of a catalytic core of 3 subunits MT-CO1, MT-CO2 and MT-CO3, encoded in the mitochondrial DNA, and 11 supernumerary subunits COX4I, COX5A, COX5B, COX6A, COX6B, COX6C, COX7A, COX7B, COX7C, COX8 and NDUFA4, which are encoded in the nuclear genome. The complex exists as a monomer or a dimer and forms supercomplexes (SCs) in the inner mitochondrial membrane with NADH-ubiquinone oxidoreductase (complex I, CI) and ubiquinol-cytochrome c oxidoreductase (cytochrome b-c1 complex, complex III, CIII), resulting in different assemblies (supercomplex SCI(1)III(2)IV(1) and megacomplex MCI(2)III(2)IV(2)). Interacts with AFG1L. Interacts with RAB5IF. Post-translationally, in response to mitochondrial stress, the precursor protein is ubiquitinated by the SIFI complex in the cytoplasm before mitochondrial import, leading to its degradation. Within the SIFI complex, UBR4 initiates ubiquitin chain that are further elongated or branched by KCMF1.

Its subcellular location is the mitochondrion inner membrane. Its pathway is energy metabolism; oxidative phosphorylation. Functionally, component of the cytochrome c oxidase, the last enzyme in the mitochondrial electron transport chain which drives oxidative phosphorylation. The respiratory chain contains 3 multisubunit complexes succinate dehydrogenase (complex II, CII), ubiquinol-cytochrome c oxidoreductase (cytochrome b-c1 complex, complex III, CIII) and cytochrome c oxidase (complex IV, CIV), that cooperate to transfer electrons derived from NADH and succinate to molecular oxygen, creating an electrochemical gradient over the inner membrane that drives transmembrane transport and the ATP synthase. Cytochrome c oxidase is the component of the respiratory chain that catalyzes the reduction of oxygen to water. Electrons originating from reduced cytochrome c in the intermembrane space (IMS) are transferred via the dinuclear copper A center (CU(A)) of subunit 2 and heme A of subunit 1 to the active site in subunit 1, a binuclear center (BNC) formed by heme A3 and copper B (CU(B)). The BNC reduces molecular oxygen to 2 water molecules using 4 electrons from cytochrome c in the IMS and 4 protons from the mitochondrial matrix. In Saimiri sciureus (Common squirrel monkey), this protein is Cytochrome c oxidase subunit 5A, mitochondrial (COX5A).